A 332-amino-acid polypeptide reads, in one-letter code: Cytochrome c oxidase subunit 2 (332 aa).

Positions 1–20 are cleaved as a signal peptide; it reads MKIPGSVITLLIGVVITVVS. The next 2 membrane-spanning stretches (helical) occupy residues 48–68 and 87–107; these read MMTIATGLFLLVEGVLVYCLI and VPLEILWTAIPTVIVFTLAVY. Positions 214, 249, 253, and 257 each coordinate Cu cation.

It belongs to the cytochrome c oxidase subunit 2 family. It depends on Cu cation as a cofactor.

It localises to the cell membrane. The catalysed reaction is 4 Fe(II)-[cytochrome c] + O2 + 8 H(+)(in) = 4 Fe(III)-[cytochrome c] + 2 H2O + 4 H(+)(out). Its function is as follows. Subunits I and II form the functional core of the enzyme complex. Electrons originating in cytochrome c are transferred via heme a and Cu(A) to the binuclear center formed by heme a3 and Cu(B). In Synechocystis sp. (strain ATCC 27184 / PCC 6803 / Kazusa), this protein is Cytochrome c oxidase subunit 2 (ctaC).